Reading from the N-terminus, the 597-residue chain is HECT-type ubiquitin ligase-interacting protein creD (597 aa).

Disordered stretches follow at residues 375–398, 439–492, and 576–597; these read EVDP…GTLS, ASEH…MATP, and SRSH…RGRA. Positions 452–466 are enriched in polar residues; sequence GPPSGSNTHGSNTHA. Over residues 472–483 the composition is skewed to basic and acidic residues; that stretch reads LSRRASDEDVHD.

The protein belongs to the arrestin family. As to quaternary structure, interacts with hulA.

Its function is as follows. Component of the regulatory network controlling carbon source utilization through ubiquitination and deubiquitination involving creA, creB, creC, creD and acrB. May be involved in signaling by recognizing appropriately phosphorylated substrates via its arrestin domains and then recruit a HECT-type ubiquitin ligase such as hulA, leading to ubiquitination of the substrate, providing a link between ubiquitination and phosphorylation in protein regulation and stability. The chain is HECT-type ubiquitin ligase-interacting protein creD (creD) from Emericella nidulans (strain FGSC A4 / ATCC 38163 / CBS 112.46 / NRRL 194 / M139) (Aspergillus nidulans).